Reading from the N-terminus, the 127-residue chain is Venom protein family 16 protein 1 (127 aa).

The first 18 residues, 1–18 (MWIWYSLLFFGVCHLAHS), serve as a signal peptide directing secretion.

In terms of tissue distribution, expressed by the venom gland (anterior main gland) (at protein level).

It is found in the secreted. This chain is Venom protein family 16 protein 1, found in Platymeris rhadamanthus (Red spot assassin bug).